Reading from the N-terminus, the 585-residue chain is Arginine--tRNA ligase (585 aa).

The short motif at 131–141 (ANPTGPMHVGH) is the 'HIGH' region element.

The protein belongs to the class-I aminoacyl-tRNA synthetase family. As to quaternary structure, monomer.

It localises to the cytoplasm. The catalysed reaction is tRNA(Arg) + L-arginine + ATP = L-arginyl-tRNA(Arg) + AMP + diphosphate. The polypeptide is Arginine--tRNA ligase (Rhizobium meliloti (strain 1021) (Ensifer meliloti)).